The chain runs to 145 residues: Large-conductance mechanosensitive channel (145 aa).

Transmembrane regions (helical) follow at residues 14–34 and 83–103; these read VIDLAVGIIIGAAFTAIVNSL and GAFLSAVINFLIIAWAVFLLV.

The protein belongs to the MscL family. As to quaternary structure, homopentamer.

The protein resides in the cell inner membrane. Channel that opens in response to stretch forces in the membrane lipid bilayer. May participate in the regulation of osmotic pressure changes within the cell. The protein is Large-conductance mechanosensitive channel of Paracoccus denitrificans (strain Pd 1222).